Here is a 122-residue protein sequence, read N- to C-terminus: T cell receptor gamma variable 9 (122 aa).

A signal peptide spans 1–20 (MLSLLHTSTLAVLGALCVYG). Residues 27–122 (PQISSTKTLS…ATYYCALWEV (96 aa)) form the Ig-like domain. An intrachain disulfide couples cysteine 43 to cysteine 117.

As to quaternary structure, gamma-delta TR is a heterodimer composed of a gamma and delta chain; disulfide-linked. The gamma-delta TR is associated with the transmembrane signaling CD3 coreceptor proteins following the stoichiometry: a single gamma-delta TR heterodimer associates with one CD3D-CD3E heterodimer, one CD3G-CD3E heterodimer and one CD247 homodimer forming a stable octameric structure. Upon activation, gamma-delta TR complex associates with FCER1G to initiate intracellular signaling.

The protein resides in the cell membrane. V region of the variable domain of T cell receptor (TR) gamma chain that participates in the antigen recognition. Gamma-delta TRs recognize a variety of self and foreign non-peptide antigens frequently expressed at the epithelial boundaries between the host and external environment, including endogenous lipids presented by MH-like protein CD1D and phosphoantigens presented by butyrophilin-like molecule BTN3A1. Upon antigen recognition induces rapid, innate-like immune responses involved in pathogen clearance and tissue repair. Binding of gamma-delta TR complex to antigen triggers phosphorylation of immunoreceptor tyrosine-based activation motifs (ITAMs) in the CD3 chains by the LCK and FYN kinases, allowing the recruitment, phosphorylation, and activation of ZAP70 that facilitates phosphorylation of the scaffolding proteins LCP2 and LAT. This lead to the formation of a supramolecular signalosome that recruits the phospholipase PLCG1, resulting in calcium mobilization and ERK activation, ultimately leading to T cell expansion and differentiation into effector cells. Gamma-delta TRs are produced through somatic rearrangement of a limited repertoire of variable (V), diversity (D), and joining (J) genes. The potential diversity of gamma-delta TRs is conferred by the unique ability to rearrange (D) genes in tandem and to utilize all three reading frames. The combinatorial diversity is considerably increased by the sequence exonuclease trimming and random nucleotide (N) region additions which occur during the V-(D)-J rearrangements. This chain is T cell receptor gamma variable 9, found in Homo sapiens (Human).